Reading from the N-terminus, the 250-residue chain is 2,3-bisphosphoglycerate-dependent phosphoglycerate mutase (250 aa).

Substrate-binding positions include Arg-10–Asn-17, Thr-23–Gly-24, Arg-62, Glu-89–Tyr-92, Lys-100, Arg-116–Arg-117, and Gly-185–Asn-186. His-11 functions as the Tele-phosphohistidine intermediate in the catalytic mechanism. The active-site Proton donor/acceptor is the Glu-89.

Belongs to the phosphoglycerate mutase family. BPG-dependent PGAM subfamily. Homodimer.

The catalysed reaction is (2R)-2-phosphoglycerate = (2R)-3-phosphoglycerate. It participates in carbohydrate degradation; glycolysis; pyruvate from D-glyceraldehyde 3-phosphate: step 3/5. Catalyzes the interconversion of 2-phosphoglycerate and 3-phosphoglycerate. The sequence is that of 2,3-bisphosphoglycerate-dependent phosphoglycerate mutase from Klebsiella pneumoniae (strain 342).